The following is a 281-amino-acid chain: CMT1A duplicated region transcript 15 protein-like protein (281 aa).

Disordered regions lie at residues 107–131 (KPAWEEPPPERALEVEGAPAKDQPS) and 150–187 (AENVAGERSGREGVTSTAPASRSHAAPSPGHGGKHGGG). Basic and acidic residues predominate over residues 108–120 (PAWEEPPPERALE). The segment covering 165-178 (STAPASRSHAAPSP) has biased composition (low complexity). Residues 207–227 (AGTTALLLQGLFIVLILVGYI) traverse the membrane as a helical segment.

The protein resides in the membrane. This is CMT1A duplicated region transcript 15 protein-like protein (CDRT15L2) from Homo sapiens (Human).